Consider the following 340-residue polypeptide: Glycerol-3-phosphate dehydrogenase [NAD(P)+] (340 aa).

The NADPH site is built by Ser14, Phe15, Arg35, and Lys108. The sn-glycerol 3-phosphate site is built by Lys108 and Gly136. Ala140 lines the NADPH pocket. Positions 191, 244, 254, 255, and 256 each coordinate sn-glycerol 3-phosphate. Residue Lys191 is the Proton acceptor of the active site. NADPH is bound at residue Arg255. Glu281 contributes to the NADPH binding site.

Belongs to the NAD-dependent glycerol-3-phosphate dehydrogenase family.

Its subcellular location is the cytoplasm. It carries out the reaction sn-glycerol 3-phosphate + NAD(+) = dihydroxyacetone phosphate + NADH + H(+). The enzyme catalyses sn-glycerol 3-phosphate + NADP(+) = dihydroxyacetone phosphate + NADPH + H(+). The protein operates within membrane lipid metabolism; glycerophospholipid metabolism. Its function is as follows. Catalyzes the reduction of the glycolytic intermediate dihydroxyacetone phosphate (DHAP) to sn-glycerol 3-phosphate (G3P), the key precursor for phospholipid synthesis. The sequence is that of Glycerol-3-phosphate dehydrogenase [NAD(P)+] from Pseudomonas aeruginosa (strain ATCC 15692 / DSM 22644 / CIP 104116 / JCM 14847 / LMG 12228 / 1C / PRS 101 / PAO1).